Reading from the N-terminus, the 760-residue chain is 5-methyltetrahydropteroyltriglutamate--homocysteine methyltransferase (760 aa).

5-methyltetrahydropteroyltri-L-glutamate-binding positions include 24-27 and Lys118; that span reads RELK. Residues 437-439 and Glu490 contribute to the L-homocysteine site; that span reads IGS. Residues 437–439 and Glu490 each bind L-methionine; that span reads IGS. 5-methyltetrahydropteroyltri-L-glutamate contacts are provided by residues 521 to 522 and Trp567; that span reads RC. Asp605 lines the L-homocysteine pocket. Residue Asp605 coordinates L-methionine. Glu611 is a binding site for 5-methyltetrahydropteroyltri-L-glutamate. Zn(2+)-binding residues include His647, Cys649, and Glu671. His700 acts as the Proton donor in catalysis. Cys732 provides a ligand contact to Zn(2+).

This sequence belongs to the vitamin-B12 independent methionine synthase family. Zn(2+) serves as cofactor.

It carries out the reaction 5-methyltetrahydropteroyltri-L-glutamate + L-homocysteine = tetrahydropteroyltri-L-glutamate + L-methionine. It functions in the pathway amino-acid biosynthesis; L-methionine biosynthesis via de novo pathway; L-methionine from L-homocysteine (MetE route): step 1/1. Catalyzes the transfer of a methyl group from 5-methyltetrahydrofolate to homocysteine resulting in methionine formation. This is 5-methyltetrahydropteroyltriglutamate--homocysteine methyltransferase from Mycobacterium leprae (strain TN).